A 906-amino-acid polypeptide reads, in one-letter code: MTAVHAGNINFKWDPKSLEIRTLAVERLLEPLVTQVTTLVNTNSKGPSNKKRGRSKKAHVLAASVEQATENFLEKGDKIAKESQFLKEELVVAVEDVRKQGDLMKSAAGEFADDPCSSVKRGNMVRAARALLSAVTRLLILADMADVYKLLVQLKVVEDGILKLRNAGNEQDLGIQYKALKPEVDKLNIMAAKRQQELKDVGNRDQMAAARGILQKNVPILYTASQACLQHPDVAAYKANRDLIYKQLQQAVTGISNAAQATASDDAAQHQGGSGGELAYALNNFDKQIIVDPLSFSEERFRPSLEERLESIISGAALMADSSCTRDDRRERIVAECNAVRQALQDLLSEYMGNAGRKERSDALNSAIDKMTKKTRDLRRQLRKAVMDHVSDSFLETNVPLLVLIEAAKNGNEKEVKEYAQVFREHANKLIEVANLACSISNNEEGVKLVRMSASQLEALCPQVINAALALAAKPQSKLAQENMDLFKEQWEKQVRVLTDAVDDITSIDDFLAVSENHILEDVNKCVIALQEKDVDGLDRTAGAIRGRAARVIHVVTSEMDNYEPGVYTEKVLEATKLLSNTVMPRFTEQVEAAVEALSSDPAQPMDENEFIDASRLVYDGIRDIRKAVLMIRTPEELDDSDFETEDFDVRSRTSVQTEDDQLIAGQSARAIMAQLPQEQKAKIAEQVASFQEEKSKLDAEVSKWDDSGNDIIVLAKQMCMIMMEMTDFTRGKGPLKNTSDVISAAKKIAEAGSRMDKLGRTIADHCPDSACKQDLLAYLQRIALYCHQLNICSKVKAEVQNLGGELVVSGVDSAMSLIQAAKNLMNAVVQTVKASYVASTKYQKSQGMASLNLPAVSWKMKAPEKKPLVKREKQDETQTKIKRASQKKHVNPVQALSEFKAMDSI.

Thr2 is subject to N-acetylthreonine. Positions 2-228 (TAVHAGNINF…PILYTASQAC (227 aa)) are involved in homodimerization. Lys57 is covalently cross-linked (Glycyl lysine isopeptide (Lys-Gly) (interchain with G-Cter in SUMO2)). An interaction with JUP and CTNNB1 region spans residues 97 to 148 (VRKQGDLMKSAAGEFADDPCSSVKRGNMVRAARALLSAVTRLLILADMADVY). Phosphoserine occurs at positions 264, 295, and 297. Residues 325 to 394 (TRDDRRERIV…AVMDHVSDSF (70 aa)) are interaction with alpha-actinin. A Phosphothreonine modification is found at Thr634. At Ser641 the chain carries Phosphoserine. At Thr645 the chain carries Phosphothreonine. Phosphoserine is present on residues Ser652 and Ser655. At Thr658 the chain carries Phosphothreonine. Lys797 is covalently cross-linked (Glycyl lysine isopeptide (Lys-Gly) (interchain with G-Cter in SUMO2)). The residue at position 851 (Ser851) is a Phosphoserine. The span at 864 to 880 (PEKKPLVKREKQDETQT) shows a compositional bias: basic and acidic residues. Residues 864–894 (PEKKPLVKREKQDETQTKIKRASQKKHVNPV) form a disordered region. The segment covering 881–891 (KIKRASQKKHV) has biased composition (basic residues).

This sequence belongs to the vinculin/alpha-catenin family. As to quaternary structure, monomer and homodimer; the monomer preferentially binds to CTNNB1 and the homodimer to actin. Component of an cadherin:catenin adhesion complex composed of at least of CDH26, beta-catenin/CTNNB1, alpha-catenin/CTNNA1 and p120 catenin/CTNND1. Possible component of an E-cadherin/ catenin adhesion complex together with E-cadherin/CDH1 and beta-catenin/CTNNB1 or gamma-catenin/JUP; the complex is located to adherens junctions. The stable association of CTNNA1 is controversial as CTNNA1 was shown not to bind to F-actin when assembled in the complex. Alternatively, the CTNNA1-containing complex may be linked to F-actin by other proteins such as LIMA1. Binds AFDN and F-actin. Interacts with LIMA1. Interacts with ARHGAP21. Interacts with AJUBA. Interacts with vinculin/VCL. Interacts with TJP2/ZO2 (via N-terminus). Interacts with TJP1/ZO1 (via N-terminus). In terms of processing, sumoylated. Post-translationally, phosphorylation seems to contribute to the strength of cell-cell adhesion rather than to the basic capacity for cell-cell adhesion. Expressed in cerebellum, heart, liver, small intestine, kidney and placenta (at protein level).

It localises to the cytoplasm. The protein localises to the cytoskeleton. The protein resides in the cell junction. Its subcellular location is the adherens junction. It is found in the cell membrane. It localises to the nucleus. Its function is as follows. Associates with the cytoplasmic domain of a variety of cadherins. The association of catenins to cadherins produces a complex which is linked to the actin filament network, and which seems to be of primary importance for cadherins cell-adhesion properties. Can associate with both E- and N-cadherins. Originally believed to be a stable component of E-cadherin/catenin adhesion complexes and to mediate the linkage of cadherins to the actin cytoskeleton at adherens junctions. In contrast, cortical actin was found to be much more dynamic than E-cadherin/catenin complexes and CTNNA1 was shown not to bind to F-actin when assembled in the complex suggesting a different linkage between actin and adherens junctions components. The homodimeric form may regulate actin filament assembly and inhibit actin branching by competing with the Arp2/3 complex for binding to actin filaments. Involved in the regulation of WWTR1/TAZ, YAP1 and TGFB1-dependent SMAD2 and SMAD3 nuclear accumulation. May play a crucial role in cell differentiation. This Mus musculus (Mouse) protein is Catenin alpha-1.